A 151-amino-acid polypeptide reads, in one-letter code: MLP-like protein 329 (151 aa).

Belongs to the MLP family.

This is MLP-like protein 329 (MLP329) from Arabidopsis thaliana (Mouse-ear cress).